The sequence spans 618 residues: Manganese lipoxygenase (618 aa).

Residues 1–16 form the signal peptide; it reads MRSRILAIVFAARHVA. The span at 36–45 shows a compositional bias: low complexity; that stretch reads SSTTVLPSPT. The tract at residues 36-58 is disordered; that stretch reads SSTTVLPSPTQYTLPNNDPNQGA. Polar residues predominate over residues 46–58; sequence QYTLPNNDPNQGA. In terms of domain architecture, Lipoxygenase spans 47–617; sequence YTLPNNDPNQ…NPAVNPFFLS (571 aa). N-linked (GlcNAc...) asparagine glycosylation is found at Asn60, Asn91, Asn106, Asn116, and Asn157. Mn(2+) contacts are provided by His290, His294, His478, and Asn482. Asn513 carries N-linked (GlcNAc...) asparagine glycosylation. Val618 contributes to the Mn(2+) binding site.

The protein belongs to the lipoxygenase family. It depends on Mn(2+) as a cofactor. In terms of processing, N- and O-glycosylated.

It is found in the secreted. The enzyme catalyses (9Z,12Z)-octadecadienoate + O2 = (11S)-hydroperoxy-(9Z,12Z)-octadecadienoate. It catalyses the reaction (9Z,12Z)-octadecadienoate + O2 = (13R)-hydroperoxy-(9Z,11E)-octadecadienoate. It carries out the reaction (9Z,12Z,15Z)-octadecatrienoate + O2 = (11S)-hydroperoxy-(9Z,12Z,15Z)-octadecatrienoate. The catalysed reaction is (9Z,12Z,15Z)-octadecatrienoate + O2 = (13R)-hydroperoxy-(9Z,11E,15Z)-octadecatrienoate. Lipoxygenase that metabolizes linoleic and alpha-linolenic acids to 11S- and 13R-hydroperoxy fatty acids. At the end of lipoxygenation, the intermediate product 11S-HPODE from linoleic acid is then transformed into 13R-HPODE as the final product. It also acts on alpha-linolenic acid producing 11S-HPOTrE and 13R-HPOTrE with subsequent transformation of 11S-HPOTrE to 13R-HPOTrE as the final product. Gamma-linolenic acid is a poor substrate. Oleate and arachidonate are not substrates. This Gaeumannomyces tritici (Wheat and barley take-all root rot fungus) protein is Manganese lipoxygenase.